Here is a 382-residue protein sequence, read N- to C-terminus: tRNA (guanine(37)-N(1))-methyltransferase (382 aa).

Residues H205, D243–L244, D269–A270, and N291 contribute to the S-adenosyl-L-methionine site.

This sequence belongs to the class I-like SAM-binding methyltransferase superfamily. TRM5/TYW2 family. Monomer.

Its subcellular location is the mitochondrion matrix. It localises to the nucleus. The protein resides in the cytoplasm. The enzyme catalyses guanosine(37) in tRNA + S-adenosyl-L-methionine = N(1)-methylguanosine(37) in tRNA + S-adenosyl-L-homocysteine + H(+). Functionally, specifically methylates the N1 position of guanosine-37 in various cytoplasmic and mitochondrial tRNAs. Methylation is not dependent on the nature of the nucleoside 5' of the target nucleoside. This is the first step in the biosynthesis of wybutosine (yW), a modified base adjacent to the anticodon of tRNAs and required for accurate decoding. This chain is tRNA (guanine(37)-N(1))-methyltransferase, found in Entamoeba histolytica (strain ATCC 30459 / HM-1:IMSS / ABRM).